A 251-amino-acid chain; its full sequence is 1-(5-phosphoribosyl)-5-[(5-phosphoribosylamino)methylideneamino] imidazole-4-carboxamide isomerase (251 aa).

The active-site Proton acceptor is Asp-7. The active-site Proton donor is the Asp-131.

It belongs to the HisA/HisF family.

The protein resides in the cytoplasm. The catalysed reaction is 1-(5-phospho-beta-D-ribosyl)-5-[(5-phospho-beta-D-ribosylamino)methylideneamino]imidazole-4-carboxamide = 5-[(5-phospho-1-deoxy-D-ribulos-1-ylimino)methylamino]-1-(5-phospho-beta-D-ribosyl)imidazole-4-carboxamide. It functions in the pathway amino-acid biosynthesis; L-histidine biosynthesis; L-histidine from 5-phospho-alpha-D-ribose 1-diphosphate: step 4/9. The protein is 1-(5-phosphoribosyl)-5-[(5-phosphoribosylamino)methylideneamino] imidazole-4-carboxamide isomerase of Blochmanniella floridana.